We begin with the raw amino-acid sequence, 678 residues long: Glutamic acid-rich protein (678 aa).

Positions 1-25 are cleaved as a signal peptide; that stretch reads MNVLFLSYNICILFFVVCTLNFSTK. The segment covering 56–79 has biased composition (basic and acidic residues); that stretch reads EKNKDDNSKSETLLKEEKDEKDDV. 3 disordered regions span residues 56 to 194, 225 to 445, and 520 to 678; these read EKNK…NLDE, ISSV…VVKN, and VVPR…NAKI. A compositionally biased stretch (polar residues) spans 80–107; sequence PTTSNDNLKNAHNNNEISSSTDPTNIIN. The segment covering 109–120 has biased composition (basic and acidic residues); sequence NDKDNENSVDKK. 15 repeat units span residues 120–122, 123–125, 126–128, 129–131, 132–134, 135–137, 138–140, 141–143, 144–146, 147–149, 150–152, 153–155, 156–158, 159–161, and 162–164. Residues 120–164 are 15 X 3 AA tandem repeats of K-K-[DEHK]; the sequence is KKDKKEKKHKKDKKEKKEKKDKKEKKDKKEKKHKKEKKHKKDKKK. Residues 121 to 165 show a composition bias toward basic residues; it reads KDKKEKKHKKDKKEKKEKKDKKEKKDKKEKKHKKEKKHKKDKKKK. Basic and acidic residues-rich tracts occupy residues 231-329 and 371-411; these read TSND…EEKE and PEEH…EHKS. 14 tandem repeats follow at residues 372-376, 377-381, 382-386, 387-391, 392-396, 397-401, 402-406, 407-411, 412-416, 417-421, 422-426, 427-431, 432-436, and 437-441. The segment at 372–416 is 9 X 5 AA tandem repeats of [EGK]-E-H-K-[EKS]; that stretch reads EEHKEGEHKEEEHKEGEHKEGEHKEEEHKEEEHKKEEHKSKEHKS. The segment covering 412 to 443 has biased composition (basic residues); the sequence is KEHKSKGKKDKGKKDKGKHKKAKKEKVKKHVV. The tract at residues 417–441 is 5 X 5 AA tandem repeats of K-[GAV]-K-[KH]-[DKEH]; the sequence is KGKKDKGKKDKGKHKKAKKEKVKKH. Residues 532-565 show a composition bias toward basic and acidic residues; the sequence is AKIEEAELQKQKHVDKEEDKKEESKEVQEESKEV. The span at 566-663 shows a compositional bias: acidic residues; the sequence is QEDEEEVEED…EEEEEEEEEE (98 aa). A compositionally biased stretch (basic residues) spans 667–678; the sequence is KIKRNLRKNAKI.

The protein is Glutamic acid-rich protein (GARP) of Plasmodium falciparum (isolate FC27 / Papua New Guinea).